The sequence spans 901 residues: HTH-type transcriptional regulator MalT (901 aa).

Position 39–46 (39–46) interacts with ATP; the sequence is SPAGYGKT. An HTH luxR-type domain is found at 829–894; it reads ELIRTSPLTQ…DAVQHAQQLL (66 aa). The H-T-H motif DNA-binding region spans 853–872; it reads NEQIAGELAVAATTIKTHIR.

This sequence belongs to the MalT family. In terms of assembly, monomer in solution. Oligomerizes to an active state in the presence of the positive effectors ATP and maltotriose.

Its activity is regulated as follows. Activated by ATP and maltotriose, which are both required for DNA binding. Positively regulates the transcription of the maltose regulon whose gene products are responsible for uptake and catabolism of malto-oligosaccharides. Specifically binds to the promoter region of its target genes, recognizing a short DNA motif called the MalT box. The polypeptide is HTH-type transcriptional regulator MalT (Salmonella gallinarum (strain 287/91 / NCTC 13346)).